Reading from the N-terminus, the 367-residue chain is Peptide chain release factor 2 (367 aa).

An N5-methylglutamine modification is found at Gln254.

Belongs to the prokaryotic/mitochondrial release factor family. Methylated by PrmC. Methylation increases the termination efficiency of RF2.

It is found in the cytoplasm. Peptide chain release factor 2 directs the termination of translation in response to the peptide chain termination codons UGA and UAA. The protein is Peptide chain release factor 2 of Bordetella avium (strain 197N).